The following is a 967-amino-acid chain: Serine/threonine-protein kinase 10 (967 aa).

Residues Ser13 and Ser20 each carry the phosphoserine modification. The Protein kinase domain occupies 36–294; it reads WEILGELGDG…AAQLLQHPFV (259 aa). ATP is bound by residues 42-50 and Lys65; that span reads LGDGAFGKV. Asp157 serves as the catalytic Proton acceptor. Residues 175 to 224 form an activation segment region; sequence DFGVSAKNLKTLQKRDSFIGTPYWMAPEVVLCETMKDAPYDYKADIWSLG. Phosphothreonine; by autocatalysis is present on Thr185. Phosphoserine; by autocatalysis is present on Ser191. Disordered regions lie at residues 317–454 and 468–498; these read EIED…RPNS and GGLELPGSVTPNHSKRASDCSNLSTSESMDY. Polar residues-rich tracts occupy residues 339 to 364, 378 to 393, and 431 to 454; these read NHTQDSSANGTQPSLNSDKLLQDSST, PCNQPSGDGSPQNTSP, and TDQAENPSSAASKPPKVNQSRPNS. 4 positions are modified to phosphoserine: Ser438, Ser450, Ser454, and Ser485. Polar residues predominate over residues 486–498; sequence DCSNLSTSESMDY. Ser514 and Ser549 each carry phosphoserine. Disordered stretches follow at residues 827-866 and 902-967; these read INGAGSASEQREKVKQFSQQEEKRQKAERLQQQQKHENQM and LDES…GDAS. Basic and acidic residues-rich tracts occupy residues 835-866 and 902-947; these read EQREKVKQFSQQEEKRQKAERLQQQQKHENQM and LDES…EAET. Thr951 is modified (phosphothreonine).

This sequence belongs to the protein kinase superfamily. STE Ser/Thr protein kinase family. STE20 subfamily. As to quaternary structure, homodimer; homodimerization is required for activation segment autophosphorylation. Autophosphorylates following homodimerization, leading to activation of the protein.

The protein localises to the cell membrane. The enzyme catalyses L-seryl-[protein] + ATP = O-phospho-L-seryl-[protein] + ADP + H(+). It catalyses the reaction L-threonyl-[protein] + ATP = O-phospho-L-threonyl-[protein] + ADP + H(+). Its activity is regulated as follows. Inhibited by the pyrrole-indolinone inhibitor SU11274 (K00593): intercalates between the ATP-binding Lys-65 and alpha-C glutamate (Glu-81), resulting in a partial disordering of the lysine side chain. Also specifically inhibited by erlotinib. Slightly inhibited by gefitinib. In terms of biological role, serine/threonine-protein kinase involved in regulation of lymphocyte migration. Phosphorylates MSN, and possibly PLK1. Involved in regulation of lymphocyte migration by mediating phosphorylation of ERM proteins such as MSN. Acts as a negative regulator of MAP3K1/MEKK1. May also act as a cell cycle regulator by acting as a polo kinase kinase: mediates phosphorylation of PLK1 in vitro; however such data require additional evidences in vivo. The chain is Serine/threonine-protein kinase 10 (Stk10) from Rattus norvegicus (Rat).